The chain runs to 148 residues: Urease accessory protein UreE (148 aa).

The protein belongs to the UreE family.

It localises to the cytoplasm. In terms of biological role, involved in urease metallocenter assembly. Binds nickel. Probably functions as a nickel donor during metallocenter assembly. This chain is Urease accessory protein UreE, found in Bacillus sp. (strain TB-90).